Reading from the N-terminus, the 197-residue chain is Peptidyl-tRNA hydrolase (197 aa).

Residue Tyr-18 participates in tRNA binding. The active-site Proton acceptor is His-23. The tRNA site is built by Tyr-68, Asn-70, and Asn-116.

Belongs to the PTH family. In terms of assembly, monomer.

It localises to the cytoplasm. The catalysed reaction is an N-acyl-L-alpha-aminoacyl-tRNA + H2O = an N-acyl-L-amino acid + a tRNA + H(+). Its function is as follows. Hydrolyzes ribosome-free peptidyl-tRNAs (with 1 or more amino acids incorporated), which drop off the ribosome during protein synthesis, or as a result of ribosome stalling. Catalyzes the release of premature peptidyl moieties from peptidyl-tRNA molecules trapped in stalled 50S ribosomal subunits, and thus maintains levels of free tRNAs and 50S ribosomes. The sequence is that of Peptidyl-tRNA hydrolase from Desulfotalea psychrophila (strain LSv54 / DSM 12343).